Reading from the N-terminus, the 365-residue chain is 2-aminoethylphosphonate--pyruvate transaminase (365 aa).

K194 is subject to N6-(pyridoxal phosphate)lysine.

The protein belongs to the class-V pyridoxal-phosphate-dependent aminotransferase family. PhnW subfamily. Homodimer. Pyridoxal 5'-phosphate is required as a cofactor.

The catalysed reaction is (2-aminoethyl)phosphonate + pyruvate = phosphonoacetaldehyde + L-alanine. In terms of biological role, involved in phosphonate degradation. The protein is 2-aminoethylphosphonate--pyruvate transaminase of Bacillus cereus (strain ATCC 14579 / DSM 31 / CCUG 7414 / JCM 2152 / NBRC 15305 / NCIMB 9373 / NCTC 2599 / NRRL B-3711).